Here is a 219-residue protein sequence, read N- to C-terminus: Ribose-5-phosphate isomerase A (219 aa).

Substrate contacts are provided by residues 28 to 31, 81 to 84, and 94 to 97; these read TGST, DGAD, and KGGG. Residue Glu103 is the Proton acceptor of the active site. Residue Lys121 coordinates substrate.

It belongs to the ribose 5-phosphate isomerase family. As to quaternary structure, homodimer.

The enzyme catalyses aldehydo-D-ribose 5-phosphate = D-ribulose 5-phosphate. It participates in carbohydrate degradation; pentose phosphate pathway; D-ribose 5-phosphate from D-ribulose 5-phosphate (non-oxidative stage): step 1/1. Its function is as follows. Catalyzes the reversible conversion of ribose-5-phosphate to ribulose 5-phosphate. This Shewanella sp. (strain MR-4) protein is Ribose-5-phosphate isomerase A.